The chain runs to 212 residues: Protein irg-1 (212 aa).

In terms of tissue distribution, expressed in the intestine.

Functionally, plays a role in innate immunity by conferring resistance to virulent strains of the Gram-negative bacterium P.aeruginosa via the zip-2 pathway. Can act independently of several immunity-related pathways including pmk-1 p38MAPK, dbl-1 TGF-beta, kgb-1 JNK and bar-1/beta-catenin pathways. This Caenorhabditis elegans protein is Protein irg-1.